The primary structure comprises 396 residues: Elongation factor Tu (396 aa).

The tr-type G domain maps to 10-206 (KAHVNIGTIG…AVDEYIPDPV (197 aa)). Residues 19–26 (GHVDHGKT) form a G1 region. 19 to 26 (GHVDHGKT) lines the GTP pocket. T26 is a Mg(2+) binding site. Residues 62–66 (GITIN) form a G2 region. The segment at 83–86 (DAPG) is G3. GTP contacts are provided by residues 83–87 (DAPGH) and 138–141 (NKSD). Residues 138–141 (NKSD) are G4. The G5 stretch occupies residues 176–178 (SAL).

Belongs to the TRAFAC class translation factor GTPase superfamily. Classic translation factor GTPase family. EF-Tu/EF-1A subfamily. As to quaternary structure, monomer.

The protein localises to the cytoplasm. The catalysed reaction is GTP + H2O = GDP + phosphate + H(+). Its function is as follows. GTP hydrolase that promotes the GTP-dependent binding of aminoacyl-tRNA to the A-site of ribosomes during protein biosynthesis. This chain is Elongation factor Tu, found in Micrococcus luteus (Micrococcus lysodeikticus).